Consider the following 376-residue polypeptide: D-alanine--D-alanine ligase B (376 aa).

The 207-residue stretch at 155 to 361 (KRLMRDAGLP…QTDLMDKLIA (207 aa)) folds into the ATP-grasp domain. 184-239 (AALGTPDLFVKPANLGSSVGVSRARSEEEFAASCALAFRYDRKILVEQALNGAREI) contributes to the ATP binding site. Mg(2+)-binding residues include aspartate 316, glutamate 328, and asparagine 330.

It belongs to the D-alanine--D-alanine ligase family. Requires Mg(2+) as cofactor. Mn(2+) serves as cofactor.

It localises to the cytoplasm. It carries out the reaction 2 D-alanine + ATP = D-alanyl-D-alanine + ADP + phosphate + H(+). It functions in the pathway cell wall biogenesis; peptidoglycan biosynthesis. Functionally, cell wall formation. The protein is D-alanine--D-alanine ligase B of Bradyrhizobium diazoefficiens (strain JCM 10833 / BCRC 13528 / IAM 13628 / NBRC 14792 / USDA 110).